Consider the following 163-residue polypeptide: Nucleotide-binding protein SYNPCC7002_A1983 (163 aa).

It belongs to the YajQ family.

In terms of biological role, nucleotide-binding protein. This is Nucleotide-binding protein SYNPCC7002_A1983 from Picosynechococcus sp. (strain ATCC 27264 / PCC 7002 / PR-6) (Agmenellum quadruplicatum).